Reading from the N-terminus, the 148-residue chain is Aspartate carbamoyltransferase regulatory chain (148 aa).

Residues C106, C111, C134, and C137 each coordinate Zn(2+).

It belongs to the PyrI family. As to quaternary structure, contains catalytic and regulatory chains. It depends on Zn(2+) as a cofactor.

Functionally, involved in allosteric regulation of aspartate carbamoyltransferase. The polypeptide is Aspartate carbamoyltransferase regulatory chain (Methanococcus maripaludis (strain C5 / ATCC BAA-1333)).